A 341-amino-acid polypeptide reads, in one-letter code: 3-keto-steroid reductase/17-beta-hydroxysteroid dehydrogenase 7 (341 aa).

Residues 1 to 229 (MRKVVLITGA…VACPGTALTN (229 aa)) lie on the Extracellular side of the membrane. 8–15 (TGASSGIG) serves as a coordination point for NAD(+). Asn37 is a glycosylation site (N-linked (GlcNAc...) asparagine). Ser171 contacts substrate. Asn178 is a glycosylation site (N-linked (GlcNAc...) asparagine). The active-site Proton acceptor is the Tyr193. N-linked (GlcNAc...) asparagine glycosylation occurs at Asn229. Residues 230–250 (LTYGILPPFIWTLLMPAILLL) form a helical membrane-spanning segment. The Cytoplasmic portion of the chain corresponds to 251-341 (RFFANAFTLT…NQARLSGSCL (91 aa)).

It belongs to the short-chain dehydrogenases/reductases (SDR) family. ERG27 subfamily. In terms of assembly, binds to the short form of prolactin receptor. Post-translationally, phosphorylated. As to expression, highly expressed in adrenal gland, liver, lung and thymus. Expressed in breast, ovaries, pituitary gland, pregnant uterus, prostate, kidney, lymph node, small intestine, spinal cord and trachea. Weakly expressed in all other tissues tested. In terms of tissue distribution, expressed in eye ciliary epithelial cells and neuroendocrine cells.

The protein resides in the endoplasmic reticulum membrane. The enzyme catalyses 17beta-estradiol + NADP(+) = estrone + NADPH + H(+). It catalyses the reaction a 3beta-hydroxysteroid + NADP(+) = a 3-oxosteroid + NADPH + H(+). The catalysed reaction is 3-dehydro-4alpha-methylzymosterol + NADPH + H(+) = 4alpha-methylzymosterol + NADP(+). It carries out the reaction zymosterone + NADPH + H(+) = zymosterol + NADP(+). The enzyme catalyses 4alpha-methyl-5alpha-cholest-8-en-3-one + NADPH + H(+) = 4alpha-methyl-5alpha-cholest-8-en-3beta-ol + NADP(+). It catalyses the reaction 4alpha-methyl-5alpha-cholest-7-en-3beta-ol + NADP(+) = 4alpha-methyl-5alpha-cholest-7-en-3-one + NADPH + H(+). The catalysed reaction is 5alpha-cholest-8-en-3-one + NADPH + H(+) = 5alpha-cholest-8-en-3beta-ol + NADP(+). It carries out the reaction 5alpha-androstane-3beta,17beta-diol + NADP(+) = 17beta-hydroxy-5alpha-androstan-3-one + NADPH + H(+). The enzyme catalyses progesterone + NADPH + H(+) = 3beta-hydroxypregn-4-ene-20-one + NADP(+). It functions in the pathway steroid biosynthesis; estrogen biosynthesis. Its pathway is steroid biosynthesis; zymosterol biosynthesis; zymosterol from lanosterol: step 5/6. Its activity is regulated as follows. Estradiol 17-beta-dehydrogenase and dihydrotestosterone oxidoreductase activities are selectively inhibited by 4-methyl-4-aza-5alpha-androstane derivatives, such as 17beta-[(N-Heptyl)methylamino]-4-aza-5r-androstan-3-one and 17beta-(N-Decylformamido)-4-aza-5r-androstan-3-one. In terms of biological role, bifunctional enzyme involved in steroid-hormone metabolism and cholesterol biosynthesis. Catalyzes the NADP(H)-dependent reduction of estrogens and androgens and regulates the biological potency of these steroids. Converts estrone (E1) to a more potent estrogen, 17beta-estradiol (E2). Converts dihydrotestosterone (DHT) to its inactive form 5a-androstane-3b,17b-diol. Converts moderately progesterone to 3beta-hydroxypregn-4-ene-20-one, leading to its inactivation. Additionally, participates in the post-squalene cholesterol biosynthesis, as a 3-ketosteroid reductase. Its function is as follows. Does not have enzymatic activities toward E1 and DHT. The sequence is that of 3-keto-steroid reductase/17-beta-hydroxysteroid dehydrogenase 7 (HSD17B7) from Homo sapiens (Human).